A 162-amino-acid chain; its full sequence is Ribosome maturation factor RimP (162 aa).

It belongs to the RimP family.

It is found in the cytoplasm. In terms of biological role, required for maturation of 30S ribosomal subunits. The polypeptide is Ribosome maturation factor RimP (Leptospira interrogans serogroup Icterohaemorrhagiae serovar copenhageni (strain Fiocruz L1-130)).